We begin with the raw amino-acid sequence, 423 residues long: Adenylosuccinate synthetase (423 aa).

GTP is bound by residues 12–18 (GDEGKGK) and 40–42 (GHT). The active-site Proton acceptor is the aspartate 13. Residues aspartate 13 and glycine 40 each coordinate Mg(2+). Residues 13–16 (DEGK), 38–41 (NAGH), threonine 128, arginine 142, glutamine 223, threonine 238, and arginine 302 each bind IMP. Histidine 41 functions as the Proton donor in the catalytic mechanism. 298-304 (TTTGRPR) serves as a coordination point for substrate. GTP-binding positions include arginine 304, 330 to 332 (RLD), and 412 to 414 (CIG).

This sequence belongs to the adenylosuccinate synthetase family. In terms of assembly, homodimer. It depends on Mg(2+) as a cofactor.

It localises to the cytoplasm. It carries out the reaction IMP + L-aspartate + GTP = N(6)-(1,2-dicarboxyethyl)-AMP + GDP + phosphate + 2 H(+). It participates in purine metabolism; AMP biosynthesis via de novo pathway; AMP from IMP: step 1/2. Functionally, plays an important role in the de novo pathway of purine nucleotide biosynthesis. Catalyzes the first committed step in the biosynthesis of AMP from IMP. This chain is Adenylosuccinate synthetase, found in Dehalococcoides mccartyi (strain ATCC BAA-2100 / JCM 16839 / KCTC 5957 / BAV1).